The primary structure comprises 200 residues: Large ribosomal subunit protein uL4 (200 aa).

Positions 38-80 (GRQGSKQQKTRSDVSGGGKRPWRQKGTGRARAGTTRGPIWRGG) are disordered.

This sequence belongs to the universal ribosomal protein uL4 family. As to quaternary structure, part of the 50S ribosomal subunit.

One of the primary rRNA binding proteins, this protein initially binds near the 5'-end of the 23S rRNA. It is important during the early stages of 50S assembly. It makes multiple contacts with different domains of the 23S rRNA in the assembled 50S subunit and ribosome. In terms of biological role, forms part of the polypeptide exit tunnel. The sequence is that of Large ribosomal subunit protein uL4 from Stutzerimonas stutzeri (strain A1501) (Pseudomonas stutzeri).